We begin with the raw amino-acid sequence, 826 residues long: Ribonucleoside-diphosphate reductase large subunit (826 aa).

Substrate contacts are provided by residues T171, 186–187 (SC), G217, 387–391 (NLCAE), and 594–598 (PTSGC). Cysteines 187 and 403 form a disulfide. N387 functions as the Proton acceptor in the catalytic mechanism. C389 acts as the Cysteine radical intermediate in catalysis. E391 (proton acceptor) is an active-site residue. The interval 747 to 769 (SVPREEQNERSPAEQMPPRPMEP) is disordered. The span at 749-758 (PREEQNERSP) shows a compositional bias: basic and acidic residues.

Belongs to the ribonucleoside diphosphate reductase large chain family. Heterotetramer composed of a homodimer of the large subunit (R1) and a homodimer of the small subunit (R2). Larger multisubunit protein complex are also active, composed of (R1)n(R2)n.

The enzyme catalyses a 2'-deoxyribonucleoside 5'-diphosphate + [thioredoxin]-disulfide + H2O = a ribonucleoside 5'-diphosphate + [thioredoxin]-dithiol. Functionally, ribonucleoside-diphosphate reductase holoenzyme provides the precursors necessary for viral DNA synthesis. Allows virus growth in non-dividing cells, as well as reactivation from latency in infected hosts. Catalyzes the biosynthesis of deoxyribonucleotides from the corresponding ribonucleotides. The polypeptide is Ribonucleoside-diphosphate reductase large subunit (Homo sapiens (Human)).